The primary structure comprises 732 residues: Interleukin-31 receptor subunit alpha (732 aa).

The first 19 residues, Met-1–Ala-19, serve as a signal peptide directing secretion. Residues Ala-20 to Glu-519 are Extracellular-facing. Fibronectin type-III domains are found at residues Lys-24–Thr-122, Pro-124–Glu-225, Glu-223–Thr-315, Pro-319–Ala-416, and Pro-421–Phe-515. N-linked (GlcNAc...) asparagine glycosylation is found at Asn-37, Asn-67, Asn-93, Asn-166, Asn-187, Asn-277, Asn-283, Asn-395, Asn-455, and Asn-504. The chain crosses the membrane as a helical span at residues Ile-520–Ala-540. At Tyr-541–Val-732 the chain is on the cytoplasmic side.

Belongs to the type I cytokine receptor family. Type 2 subfamily. As to quaternary structure, heterodimer with OSMR. Interacts with JAK1 and STAT3. Post-translationally, N-glycosylated. As to expression, expressed in CD14- and CD56-positive blood cells. Expressed in macrophages. Expressed in keratinocytes. Expressed in a subset of dorsal root ganglia neurons (at protein level). Expressed at low levels in testis, ovary, brain, prostate, placenta, thymus, bone marrow, trachea and skin. Expressed in bronchial and alveolar epithelial cells and pulmonary fibroblasts. Detected in all of the myelomonocytic lineage. Isoform 6: Expressed at higher levels in lesional skin compared to healthy skin of atopic dermatitis patients.

It localises to the cell membrane. The protein resides in the presynaptic cell membrane. Its subcellular location is the cell projection. It is found in the axon. Associates with OSMR to form the interleukin-31 receptor which activates STAT3 and to a lower extent STAT1 and STAT5. May function in skin immunity. Mediates IL31-induced itch, probably in a manner dependent on cation channels TRPA1 and TRPV1. Positively regulates numbers and cycling status of immature subsets of myeloid progenitor cells in bone marrow in vivo and enhances myeloid progenitor cell survival in vitro. This chain is Interleukin-31 receptor subunit alpha (IL31RA), found in Homo sapiens (Human).